A 251-amino-acid chain; its full sequence is Hydroxyacylglutathione hydrolase (251 aa).

Zn(2+) is bound by residues His53, His55, Asp57, His58, His110, Asp127, and His165.

This sequence belongs to the metallo-beta-lactamase superfamily. Glyoxalase II family. Monomer. Zn(2+) is required as a cofactor.

The enzyme catalyses an S-(2-hydroxyacyl)glutathione + H2O = a 2-hydroxy carboxylate + glutathione + H(+). It participates in secondary metabolite metabolism; methylglyoxal degradation; (R)-lactate from methylglyoxal: step 2/2. Functionally, thiolesterase that catalyzes the hydrolysis of S-D-lactoyl-glutathione to form glutathione and D-lactic acid. This Escherichia coli O9:H4 (strain HS) protein is Hydroxyacylglutathione hydrolase.